We begin with the raw amino-acid sequence, 413 residues long: Peptidase T (413 aa).

Histidine 84 serves as a coordination point for Zn(2+). Aspartate 86 is an active-site residue. Aspartate 146 contacts Zn(2+). The active-site Proton acceptor is glutamate 180. Zn(2+) is bound by residues glutamate 181, aspartate 203, and histidine 385.

Belongs to the peptidase M20B family. Zn(2+) serves as cofactor.

The protein resides in the cytoplasm. It catalyses the reaction Release of the N-terminal residue from a tripeptide.. In terms of biological role, cleaves the N-terminal amino acid of tripeptides. The sequence is that of Peptidase T from Limosilactobacillus fermentum (strain NBRC 3956 / LMG 18251) (Lactobacillus fermentum).